The chain runs to 425 residues: MAKQIQAIRGMNDCLPEQSPVWQKVEQILRQVVASYGYSEVRMPIVEQTHLFKRAIGEVTDVVEKEMYTFEDRNGDSLSLRPEGTASCVRAGIEHGLLYNQERRMWYMGPMFRHERPQKGRYRQFHQFGVELFGINGPDIDAELIMLTHRLWRLFGISDHVTLQLNTLGQSSERAAYRDALVAYLEQYKDQLDEESQRRMYSNPLRVLDSKDERVQAILVKAPRLFDHLGEESLAHFEGLKRLLESAGIKYEVNERLVRGLDYYNLTVFEWVTTSLGAQGTVCAGGRYDGLVEQLGGQATPAVGFAMGMERLVLMLETLELNADIRPAVDVYLAMVGEGSEQAGFQLAERLRDALPDLRLMSHCGGGNFKKQLKRADKSGAAIALILGETEVQNGEITIKYLRGQAEQQTVTVDAAIALLAAKGD.

It belongs to the class-II aminoacyl-tRNA synthetase family. In terms of assembly, homodimer.

The protein resides in the cytoplasm. It catalyses the reaction tRNA(His) + L-histidine + ATP = L-histidyl-tRNA(His) + AMP + diphosphate + H(+). This Aeromonas salmonicida (strain A449) protein is Histidine--tRNA ligase.